The chain runs to 285 residues: Type II secretion system protein C (285 aa).

The Cytoplasmic segment spans residues 1-27 (MSKGIKMHNSVMRLTIPNKKIINYAPH). A helical membrane pass occupies residues 28–46 (IVTSIILFFICQQLAQLTW). Residues 47–285 (KIILPVNFTD…NDIYLALRDE (239 aa)) lie on the Periplasmic side of the membrane.

It belongs to the GSP C family.

The protein resides in the cell inner membrane. Its function is as follows. Involved in a type II secretion system (T2SS, formerly general secretion pathway, GSP) for the export of proteins. Required for the translocation of pullulanase. In Klebsiella pneumoniae, this protein is Type II secretion system protein C (pulC).